Reading from the N-terminus, the 394-residue chain is Mitogen-activated protein kinase 2 (394 aa).

Polar residues predominate over residues 1–10 (MDGPAQQTDT). The tract at residues 1 to 27 (MDGPAQQTDTVMAEAAAAQQPAPPSQP) is disordered. The region spanning 61–346 (KPPIMPIGKG…VEDALAHPYL (286 aa)) is the Protein kinase domain. ATP-binding positions include 67-75 (IGKGAYGIV) and Lys90. Asp187 functions as the Proton acceptor in the catalytic mechanism. The residue at position 219 (Thr219) is a Phosphothreonine. The short motif at 219-221 (TEY) is the TXY element. Position 221 is a phosphotyrosine (Tyr221). The residue at position 224 (Thr224) is a Phosphothreonine.

Belongs to the protein kinase superfamily. CMGC Ser/Thr protein kinase family. MAP kinase subfamily. The cofactor is Mg(2+). Post-translationally, activated by cold, wounding and UV-C in a cultivar-dependent manner; phosphorylated at Tyr-221 in cv. Subicho but not in cv. Pungchon. As to expression, expressed constitutively in roots, stems, flowers and fruits of the hot pepper (cv. Subicho).

The enzyme catalyses L-seryl-[protein] + ATP = O-phospho-L-seryl-[protein] + ADP + H(+). It catalyses the reaction L-threonyl-[protein] + ATP = O-phospho-L-threonyl-[protein] + ADP + H(+). With respect to regulation, activated by threonine and tyrosine phosphorylation. In terms of biological role, protein kinase involved in oxidative stress-mediated and innate immune MAP kinase signaling cascades. The protein is Mitogen-activated protein kinase 2 of Capsicum annuum (Capsicum pepper).